Consider the following 144-residue polypeptide: uncharacterized protein (144 aa).

Helical transmembrane passes span 76-96 (LLSA…VTML) and 105-125 (ILRA…VKSY).

It belongs to the RseC family.

It localises to the cell inner membrane. This is an uncharacterized protein from Haemophilus influenzae (strain ATCC 51907 / DSM 11121 / KW20 / Rd).